Consider the following 309-residue polypeptide: Ribosomal RNA small subunit methyltransferase H (309 aa).

Residues 41–43, Asp61, Phe85, Asp102, and Gln109 each bind S-adenosyl-L-methionine; that span reads GGH.

It belongs to the methyltransferase superfamily. RsmH family.

The protein localises to the cytoplasm. It catalyses the reaction cytidine(1402) in 16S rRNA + S-adenosyl-L-methionine = N(4)-methylcytidine(1402) in 16S rRNA + S-adenosyl-L-homocysteine + H(+). Functionally, specifically methylates the N4 position of cytidine in position 1402 (C1402) of 16S rRNA. This chain is Ribosomal RNA small subunit methyltransferase H, found in Albidiferax ferrireducens (strain ATCC BAA-621 / DSM 15236 / T118) (Rhodoferax ferrireducens).